Reading from the N-terminus, the 534-residue chain is Cytochrome c oxidase subunit 1 (534 aa).

The chain crosses the membrane as a helical span at residues 16–36 (VLYFIFAIFCGMAGTAMSLII). Ca(2+) contacts are provided by Glu39, Ala42, and Gly44. 6 helical membrane-spanning segments follow: residues 57-77 (VLVV…ALIG), 101-121 (ISFW…LVES), 147-167 (AIFA…NFIV), 182-202 (LPLF…SLPV), 235-255 (LFWF…FGII), and 267-287 (VFGE…GFLV). Position 62 (His62) interacts with Fe(II)-heme a. His241 contacts Cu cation. The 1'-histidyl-3'-tyrosine (His-Tyr) cross-link spans 241-245 (HPEVY). Tyr245 provides a ligand contact to O2. His290 and His291 together coordinate Cu cation. 2 helical membrane-spanning segments follow: residues 310 to 330 (MIIA…IYGG) and 338 to 358 (MLYA…GVAL). Mg(2+)-binding residues include His368 and Asp369. Helical transmembrane passes span 372–392 (YVVG…LFAG) and 412–432 (IQFW…HFLG). Heme a3 is bound at residue His376. His378 serves as a coordination point for Fe(II)-heme a. Pro441 contacts Ca(2+). Residues 452 to 472 (YVASIGSIIAVFSLFLFIYIL) form a helical membrane-spanning segment.

The protein belongs to the heme-copper respiratory oxidase family. In terms of assembly, component of the cytochrome c oxidase (complex IV, CIV), a multisubunit enzyme composed of a catalytic core of 3 subunits and several supernumerary subunits. The complex exists as a monomer or a dimer and forms supercomplexes (SCs) in the inner mitochondrial membrane with ubiquinol-cytochrome c oxidoreductase (cytochrome b-c1 complex, complex III, CIII). Requires heme as cofactor. The cofactor is Cu cation.

The protein resides in the mitochondrion inner membrane. The enzyme catalyses 4 Fe(II)-[cytochrome c] + O2 + 8 H(+)(in) = 4 Fe(III)-[cytochrome c] + 2 H2O + 4 H(+)(out). Its pathway is energy metabolism; oxidative phosphorylation. In terms of biological role, component of the cytochrome c oxidase, the last enzyme in the mitochondrial electron transport chain which drives oxidative phosphorylation. The respiratory chain contains 3 multisubunit complexes succinate dehydrogenase (complex II, CII), ubiquinol-cytochrome c oxidoreductase (cytochrome b-c1 complex, complex III, CIII) and cytochrome c oxidase (complex IV, CIV), that cooperate to transfer electrons derived from NADH and succinate to molecular oxygen, creating an electrochemical gradient over the inner membrane that drives transmembrane transport and the ATP synthase. Cytochrome c oxidase is the component of the respiratory chain that catalyzes the reduction of oxygen to water. Electrons originating from reduced cytochrome c in the intermembrane space (IMS) are transferred via the dinuclear copper A center (CU(A)) of subunit 2 and heme A of subunit 1 to the active site in subunit 1, a binuclear center (BNC) formed by heme A3 and copper B (CU(B)). The BNC reduces molecular oxygen to 2 water molecules using 4 electrons from cytochrome c in the IMS and 4 protons from the mitochondrial matrix. In Kluyveromyces lactis (strain ATCC 8585 / CBS 2359 / DSM 70799 / NBRC 1267 / NRRL Y-1140 / WM37) (Yeast), this protein is Cytochrome c oxidase subunit 1 (COX1).